The primary structure comprises 1183 residues: Putative ATP-dependent RNA helicase PB1A10.06c (1183 aa).

2 disordered regions span residues 1 to 92 (MGRL…KKRL) and 165 to 315 (ETTT…RASR). Positions 60-81 (VPKEERQKRKQELKDQLLKENE) are enriched in basic and acidic residues. Low complexity-rich tracts occupy residues 165-176 (ETTTTKSSTAET) and 184-196 (TRSGFGFGFSTGT). The span at 224–251 (EDPEYDSAEEDYLSTDSEEFSEDSDNSS) shows a compositional bias: acidic residues. Basic and acidic residues predominate over residues 252–270 (EENKDTNEPSTKDAEKTVP). The segment covering 292–308 (ENEDFDLETSEDDSSDD) has biased composition (acidic residues). One can recognise a Helicase ATP-binding domain in the interval 408-585 (MEQIFANDVV…KLLFSVPPPI (178 aa)). 421–428 (GATGSGKT) lines the ATP pocket. Positions 522 to 525 (DEAH) match the DEAH box motif. One can recognise a Helicase C-terminal domain in the interval 611–831 (AFDKVCLIHK…SIVLQMKNMN (221 aa)). The segment covering 673–683 (EDLQSETEDID) has biased composition (acidic residues). The tract at residues 673–696 (EDLQSETEDIDQVPTSSSSSVTYD) is disordered.

It belongs to the DEAD box helicase family. DEAH subfamily.

It is found in the nucleus. The protein localises to the nucleolus. It carries out the reaction ATP + H2O = ADP + phosphate + H(+). This is Putative ATP-dependent RNA helicase PB1A10.06c from Schizosaccharomyces pombe (strain 972 / ATCC 24843) (Fission yeast).